Consider the following 317-residue polypeptide: Cytochrome c biogenesis protein CcsA (317 aa).

8 consecutive transmembrane segments (helical) span residues 9–29 (ILTHISFSVVSIGITIYLITF), 46–63 (TATAFCLTGLLITRWVYS), 71–91 (LYESLIFLSWSLSIIHKIFDF), 98–118 (LSAITAPSAFFTQGFATSGFL), 143–163 (MVLGYAALLCGSLLSTALLVI), 225–245 (IISLGFIFLTTGILSGAVWAN), 258–273 (ETWAFITWTIFGIYLH), and 286–306 (AIVASMGFLIIWICYFGVNLL).

This sequence belongs to the CcmF/CycK/Ccl1/NrfE/CcsA family. May interact with Ccs1.

Its subcellular location is the plastid. The protein resides in the chloroplast thylakoid membrane. In terms of biological role, required during biogenesis of c-type cytochromes (cytochrome c6 and cytochrome f) at the step of heme attachment. This Citrus sinensis (Sweet orange) protein is Cytochrome c biogenesis protein CcsA.